The chain runs to 429 residues: Gamma-glutamyl phosphate reductase (429 aa).

Belongs to the gamma-glutamyl phosphate reductase family.

It is found in the cytoplasm. The enzyme catalyses L-glutamate 5-semialdehyde + phosphate + NADP(+) = L-glutamyl 5-phosphate + NADPH + H(+). It participates in amino-acid biosynthesis; L-proline biosynthesis; L-glutamate 5-semialdehyde from L-glutamate: step 2/2. In terms of biological role, catalyzes the NADPH-dependent reduction of L-glutamate 5-phosphate into L-glutamate 5-semialdehyde and phosphate. The product spontaneously undergoes cyclization to form 1-pyrroline-5-carboxylate. This Nocardioides sp. (strain ATCC BAA-499 / JS614) protein is Gamma-glutamyl phosphate reductase.